A 220-amino-acid polypeptide reads, in one-letter code: MKTGALATFLALCLPVTVFATTLRLSNEVDLLVLDGKKVSSSLLRGAESIELENGPHQLVFRVEKTIRLPGNEERLYISPPLVISFDTQLISQVNFQLPRLENEREASHFNAAPRLALLDGDAMPIPVKLDILAITSTAKVVDYEIETERYNKSAKRASLPQFATMMADDSTLLSDVSELDTVPPQSQTLTEQRLKYWFRLADPQTRHHFLQWAEKQPPS.

The signal sequence occupies residues 1-20 (MKTGALATFLALCLPVTVFA).

The protein belongs to the UPF0319 family.

The protein is UPF0319 protein YccT of Salmonella enteritidis PT4 (strain P125109).